A 314-amino-acid chain; its full sequence is Homeobox protein knotted-1-like 3 (314 aa).

Residues 218–238 (ELKIELKQGFKSRIEDVREEI) enclose the ELK domain. The segment at residues 239-302 (LRKRRAGKLP…NQRKRNWHNN (64 aa)) is a DNA-binding region (homeobox; TALE-type).

This sequence belongs to the TALE/KNOX homeobox family. In terms of tissue distribution, isoform 1 is expressed in roots and flowers, and at lower levels in leaf blades and leaf sheaths. Isoform 2 is expressed in roots and flowers.

The protein resides in the nucleus. This Oryza sativa subsp. japonica (Rice) protein is Homeobox protein knotted-1-like 3 (HOS66).